A 359-amino-acid polypeptide reads, in one-letter code: Phosphate acyltransferase (359 aa).

This sequence belongs to the PlsX family. As to quaternary structure, homodimer. Probably interacts with PlsY.

It is found in the cytoplasm. It catalyses the reaction a fatty acyl-[ACP] + phosphate = an acyl phosphate + holo-[ACP]. It functions in the pathway lipid metabolism; phospholipid metabolism. Functionally, catalyzes the reversible formation of acyl-phosphate (acyl-PO(4)) from acyl-[acyl-carrier-protein] (acyl-ACP). This enzyme utilizes acyl-ACP as fatty acyl donor, but not acyl-CoA. The polypeptide is Phosphate acyltransferase (Salmonella heidelberg (strain SL476)).